The chain runs to 65 residues: Large ribosomal subunit protein bL35 (65 aa).

Residues 1–26 (MPKIKTLRGAAKRFKKTASGGFKRKQ) form a disordered region. Basic residues predominate over residues 10–26 (AAKRFKKTASGGFKRKQ).

Belongs to the bacterial ribosomal protein bL35 family.

This Histophilus somni (strain 2336) (Haemophilus somnus) protein is Large ribosomal subunit protein bL35.